The primary structure comprises 355 residues: Lamassu protein LmuA (355 aa).

Functionally, component of antiviral defense system Lamassu type II, composed of LmuA and LmuB. Expression of Lamassu type II in B.subtilis (strain BEST7003) confers resistance to phage SpBeta. May be a nuclease. The chain is Lamassu protein LmuA from Bacillus cereus (strain VD014).